The chain runs to 58 residues: Large ribosomal subunit protein uL30 (58 aa).

Belongs to the universal ribosomal protein uL30 family. Part of the 50S ribosomal subunit.

This chain is Large ribosomal subunit protein uL30, found in Erythrobacter litoralis (strain HTCC2594).